Consider the following 251-residue polypeptide: 5-oxoprolinase subunit A (251 aa).

The protein belongs to the LamB/PxpA family. As to quaternary structure, forms a complex composed of PxpA, PxpB and PxpC.

The catalysed reaction is 5-oxo-L-proline + ATP + 2 H2O = L-glutamate + ADP + phosphate + H(+). Its function is as follows. Catalyzes the cleavage of 5-oxoproline to form L-glutamate coupled to the hydrolysis of ATP to ADP and inorganic phosphate. This chain is 5-oxoprolinase subunit A, found in Paracidovorax citrulli (strain AAC00-1) (Acidovorax citrulli).